The following is a 330-amino-acid chain: MTLIVTGAAGFIGANIVKALNERGETRIIAVDNLTRADKFRNLVDCEIDDYLDKTEFVERFARGDFGKVRAVFHEGACSDTMETDGRYMMDNNFRYSRAVLDTCLMQGTQFLYASSAAIYGGSTRFVEERDVEAPLNVYGYSKFLFDQVIRRVLPSAKSQIAGFRYFNVYGPRETHKGRMASVAFHNFNQFRAEGKVKLFGEYNGYAPGEQTRDFVSVEDVTKVNLFFFDHPEKSGIFNLGTGRAQPFNDIASTVVNTLRALDNQPPLTLAQQVEQGLIEYVPFPDALRGKYQCFTQADQTKLRAAGYDAPFLTVQEGVDRYVRWLSGQV.

NADP(+)-binding positions include 11-12 (FI), 32-33 (DN), K39, K54, 75-79 (EGACS), and N92. Catalysis depends on Y139, which acts as the Proton acceptor. K143 is a binding site for NADP(+). N168 is a substrate binding site. V169 and K177 together coordinate NADP(+). The active-site Proton acceptor is the K177. Residues R179, H186, 200-203 (FGEY), R213, and Y292 contribute to the substrate site.

Belongs to the NAD(P)-dependent epimerase/dehydratase family. HldD subfamily. As to quaternary structure, homopentamer. NADP(+) is required as a cofactor.

It carries out the reaction ADP-D-glycero-beta-D-manno-heptose = ADP-L-glycero-beta-D-manno-heptose. The protein operates within nucleotide-sugar biosynthesis; ADP-L-glycero-beta-D-manno-heptose biosynthesis; ADP-L-glycero-beta-D-manno-heptose from D-glycero-beta-D-manno-heptose 7-phosphate: step 4/4. In terms of biological role, catalyzes the interconversion between ADP-D-glycero-beta-D-manno-heptose and ADP-L-glycero-beta-D-manno-heptose via an epimerization at carbon 6 of the heptose. The sequence is that of ADP-L-glycero-D-manno-heptose-6-epimerase from Burkholderia cenocepacia (strain ATCC BAA-245 / DSM 16553 / LMG 16656 / NCTC 13227 / J2315 / CF5610) (Burkholderia cepacia (strain J2315)).